A 241-amino-acid polypeptide reads, in one-letter code: Hydantoin racemase (241 aa).

The protein belongs to the HyuE racemase family. Homotetramer.

It carries out the reaction a D-5-monosubstituted hydantoin = a L-5-monosubstituted hydantoin. The catalysed reaction is D-5-benzylhydantoin = L-5-benzylhydantoin. The enzyme catalyses D-5-isobutylhydantoin = L-5-isobutylhydantoin. Inhibited by Cu(2+), Hg(2+), Pb(2+) and Zn(2+). The activity is twofold lower in the presence of Mn(2+), Co(2+) and Ni(2+). The insignificant effect of the metal chelating agent EDTA on the hydantoin racemase activity would indicate that it is not a metalloenzyme. May be involved in the asymmetric conversion of racemic 5-substituted hydantoins to the corresponding L-amino acids. Catalyzes the racemization via enolization of D- and L-5-monosubstituted hydantoins. The polypeptide is Hydantoin racemase (Rhizobium meliloti (Ensifer meliloti)).